Here is a 1875-residue protein sequence, read N- to C-terminus: Protein MLP1 (1875 aa).

Ser2 carries the N-acetylserine modification. 2 coiled-coil regions span residues 69–487 (ELKA…IQYL) and 531–1678 (ERLV…SAES). Phosphothreonine is present on Thr337. Ser379 bears the Phosphoserine mark. Residues 1496–1565 (QPSNINMEEI…EEKVEERIKS (70 aa)) carry the Required for nuclear localization motif. Positions 1641–1689 (KKSFDEGKQQAMMKTTLLERKLAKMESQLSETKQSAESPPKSVNNVQNP) are disordered. The segment covering 1667–1688 (SQLSETKQSAESPPKSVNNVQN) has biased composition (polar residues). A phosphoserine mark is found at Ser1670 and Ser1710. Residues 1716–1725 (KLNSKSSSGG) show a composition bias toward low complexity. Residues 1716 to 1875 (KLNSKSSSGG…TDKVNDENSI (160 aa)) are disordered. The segment covering 1728–1737 (PFTSPSPNKH) has biased composition (polar residues). A Phosphoserine modification is found at Ser1733. The span at 1738–1748 (LQNDNDKRESL) shows a compositional bias: basic and acidic residues. Polar residues predominate over residues 1787–1801 (TSNNPAQKDSSNRNV). Ser1803 carries the post-translational modification Phosphoserine. 2 stretches are compositionally biased toward basic and acidic residues: residues 1807 to 1840 (TEKK…GELK) and 1865 to 1875 (ETDKVNDENSI). Positions 1834 to 1866 (DEVGELKNDEDDTTENINESKKIKTEDEEEKET) form a coiled coil.

As to quaternary structure, component of the nuclear pore complex (NPC). NPC constitutes the exclusive means of nucleocytoplasmic transport. NPCs allow the passive diffusion of ions and small molecules and the active, nuclear transport receptor-mediated bidirectional transport of macromolecules such as proteins, RNAs, ribonucleoparticles (RNPs), and ribosomal subunits across the nuclear envelope. Due to its 8-fold rotational symmetry, all subunits are present with 8 copies or multiples thereof. Interacts with NAB2, a hnRNP required for mRNA export. Interacts with MLP2. In terms of processing, may be phosphorylated by CDC28.

The protein resides in the nucleus. It is found in the nuclear pore complex. Its function is as follows. Together with the closely related MLP2, involved in the structural and functional organization of perinuclear chromatin. Together with MLP2, associates with the nuclear pore complex and form filamentous structures along the nuclear periphery. Has a role in the localization of Esc1 to nucleolar regions. Together with MLP2, mediates tethering of the some telomeres to the nuclear periphery, probably mediated by YKU70/YKU80 (HDF1/HDF2) heterodimer and show perinuclear location dependent silencing. MLP1 and MLP2 are involved in telomere length regulation but not silencing or telomere anchoring. Recognizes the 5'-splice site of pre-mRNAs and retains unspliced pre-mRNA in the nucleus without affecting splicing itself. The chain is Protein MLP1 (MLP1) from Saccharomyces cerevisiae (strain ATCC 204508 / S288c) (Baker's yeast).